A 217-amino-acid polypeptide reads, in one-letter code: Homologous-pairing protein 2 homolog (217 aa).

Positions 84–152 form a coiled coil; that stretch reads ADLHGLDASI…RLKNIKAATN (69 aa). Residues 118–182 are DNA-binding; it reads TSALTTPEMQ…WRKRKRMTTE (65 aa).

It belongs to the HOP2 family. Interacts with the DNA-binding domain of the nuclear receptors NR3C1/GR, ESR2/ER-beta, THRB and RXRA. Forms a stable heterodimer with MND1. Interacts with PSMC3/TBP1. In terms of processing, phosphorylated by PKA, PKC and MAPK. As to expression, highly expressed in testis and more specifically in spermatocytes. Detected in spleen, ovary and thymus.

The protein resides in the nucleus. Plays an important role in meiotic recombination. Stimulates DMC1-mediated strand exchange required for pairing homologous chromosomes during meiosis. The complex PSMC3IP/MND1 binds DNA, stimulates the recombinase activity of DMC1 as well as DMC1 D-loop formation from double-strand DNA. This complex stabilizes presynaptic RAD51 and DMC1 filaments formed on single strand DNA to capture double-strand DNA. This complex stimulates both synaptic and presynaptic critical steps in RAD51 and DMC1-promoted homologous pairing. May inhibit HIV-1 viral protein TAT activity and modulate the activity of proteasomes through association with PSMC3. The chain is Homologous-pairing protein 2 homolog (Psmc3ip) from Mus musculus (Mouse).